Here is a 465-residue protein sequence, read N- to C-terminus: Cysteine--tRNA ligase (465 aa).

Zn(2+) is bound at residue Cys-30. A 'HIGH' region motif is present at residues 32-42 (MTVYDYCHVGH). The Zn(2+) site is built by Cys-214, His-239, and Glu-243. The 'KMSKS' region signature appears at 271-275 (KMSKS). Residue Lys-274 participates in ATP binding.

The protein belongs to the class-I aminoacyl-tRNA synthetase family. In terms of assembly, monomer. Zn(2+) serves as cofactor.

The protein resides in the cytoplasm. It carries out the reaction tRNA(Cys) + L-cysteine + ATP = L-cysteinyl-tRNA(Cys) + AMP + diphosphate. This Ralstonia nicotianae (strain ATCC BAA-1114 / GMI1000) (Ralstonia solanacearum) protein is Cysteine--tRNA ligase.